Here is a 425-residue protein sequence, read N- to C-terminus: Enolase (425 aa).

Glutamine 162 contacts (2R)-2-phosphoglycerate. Glutamate 204 (proton donor) is an active-site residue. Aspartate 241, glutamate 284, and aspartate 311 together coordinate Mg(2+). Residues lysine 336, arginine 365, serine 366, and lysine 387 each coordinate (2R)-2-phosphoglycerate. Lysine 336 serves as the catalytic Proton acceptor.

Belongs to the enolase family. The cofactor is Mg(2+).

The protein localises to the cytoplasm. The protein resides in the secreted. It localises to the cell surface. The enzyme catalyses (2R)-2-phosphoglycerate = phosphoenolpyruvate + H2O. It participates in carbohydrate degradation; glycolysis; pyruvate from D-glyceraldehyde 3-phosphate: step 4/5. In terms of biological role, catalyzes the reversible conversion of 2-phosphoglycerate (2-PG) into phosphoenolpyruvate (PEP). It is essential for the degradation of carbohydrates via glycolysis. The sequence is that of Enolase from Brucella abortus (strain S19).